The following is a 147-amino-acid chain: Deoxyuridine 5'-triphosphate nucleotidohydrolase (147 aa).

Residues Arg-67–Gly-69, Asn-80, and Thr-84–Asp-86 each bind substrate.

Belongs to the dUTPase family. Requires Mg(2+) as cofactor.

It catalyses the reaction dUTP + H2O = dUMP + diphosphate + H(+). It functions in the pathway pyrimidine metabolism; dUMP biosynthesis; dUMP from dCTP (dUTP route): step 2/2. This enzyme is involved in nucleotide metabolism: it produces dUMP, the immediate precursor of thymidine nucleotides and it decreases the intracellular concentration of dUTP so that uracil cannot be incorporated into DNA. The sequence is that of Deoxyuridine 5'-triphosphate nucleotidohydrolase from Anaeromyxobacter dehalogenans (strain 2CP-1 / ATCC BAA-258).